We begin with the raw amino-acid sequence, 468 residues long: Cysteine--tRNA ligase (468 aa).

Residue Cys-27 coordinates Zn(2+). A 'HIGH' region motif is present at residues 29–39 (PTVYDDAHLGH). Positions 204, 234, and 238 each coordinate Zn(2+). Residues 266-270 (KMSKS) carry the 'KMSKS' region motif. Lys-269 provides a ligand contact to ATP.

It belongs to the class-I aminoacyl-tRNA synthetase family. Monomer. It depends on Zn(2+) as a cofactor.

The protein localises to the cytoplasm. It catalyses the reaction tRNA(Cys) + L-cysteine + ATP = L-cysteinyl-tRNA(Cys) + AMP + diphosphate. The sequence is that of Cysteine--tRNA ligase from Campylobacter hominis (strain ATCC BAA-381 / DSM 21671 / CCUG 45161 / LMG 19568 / NCTC 13146 / CH001A).